The primary structure comprises 45 residues: Myotoxin-3 (45 aa).

Cystine bridges form between C4/C36, C11/C30, and C18/C37.

Monomer. As to expression, expressed by the venom gland.

The protein resides in the secreted. Functionally, cationic peptide that possesses multiple functions. It acts as a cell-penetrating peptide (CPP), and as a potent voltage-gated potassium channel (Kv) inhibitor. It exhibits antimicrobial activities, hind limb paralysis, and severe muscle necrosis by a non-enzymatic mechanism. The polypeptide is Myotoxin-3 (Crotalus viridis viridis (Prairie rattlesnake)).